A 218-amino-acid chain; its full sequence is Adenylate kinase (218 aa).

Residue 10–15 (GAGKGT) participates in ATP binding. The interval 30-59 (STGDMLRAAVKAQSELGMAAKKVMDEGGLV) is NMP. AMP is bound by residues T31, R36, 57 to 59 (GLV), 85 to 88 (GFPR), and Q92. An LID region spans residues 122–159 (GRRVHPASGRTYHIVFNPPAVEGKDDVTGEDLVQRDDD). Residues R123 and 132–133 (TY) contribute to the ATP site. Positions 156 and 167 each coordinate AMP. G203 contributes to the ATP binding site.

It belongs to the adenylate kinase family. As to quaternary structure, monomer.

It is found in the cytoplasm. The catalysed reaction is AMP + ATP = 2 ADP. It functions in the pathway purine metabolism; AMP biosynthesis via salvage pathway; AMP from ADP: step 1/1. Functionally, catalyzes the reversible transfer of the terminal phosphate group between ATP and AMP. Plays an important role in cellular energy homeostasis and in adenine nucleotide metabolism. The protein is Adenylate kinase of Chlorobaculum parvum (strain DSM 263 / NCIMB 8327) (Chlorobium vibrioforme subsp. thiosulfatophilum).